We begin with the raw amino-acid sequence, 88 residues long: MYNKEIKEEIIKEYQTKEGDTGSPEVQVALLTYRINYLTEHLKSHKNDHHSRRGLFKMIGKRRNLLNYLSNKDIERYRDLIKRLNIRR.

Belongs to the universal ribosomal protein uS15 family. Part of the 30S ribosomal subunit. Forms a bridge to the 50S subunit in the 70S ribosome, contacting the 23S rRNA.

Functionally, one of the primary rRNA binding proteins, it binds directly to 16S rRNA where it helps nucleate assembly of the platform of the 30S subunit by binding and bridging several RNA helices of the 16S rRNA. In terms of biological role, forms an intersubunit bridge (bridge B4) with the 23S rRNA of the 50S subunit in the ribosome. This chain is Small ribosomal subunit protein uS15, found in Finegoldia magna (strain ATCC 29328 / DSM 20472 / WAL 2508) (Peptostreptococcus magnus).